A 249-amino-acid chain; its full sequence is Segregation and condensation protein A (249 aa).

The protein belongs to the ScpA family. Component of a cohesin-like complex composed of ScpA, ScpB and the Smc homodimer, in which ScpA and ScpB bind to the head domain of Smc. The presence of the three proteins is required for the association of the complex with DNA.

The protein localises to the cytoplasm. Its function is as follows. Participates in chromosomal partition during cell division. May act via the formation of a condensin-like complex containing Smc and ScpB that pull DNA away from mid-cell into both cell halves. This is Segregation and condensation protein A from Listeria innocua serovar 6a (strain ATCC BAA-680 / CLIP 11262).